The chain runs to 1053 residues: Polyphosphate kinase (1053 aa).

Disordered regions lie at residues 23 to 155, 200 to 245, and 302 to 328; these read LKIN…QLME, VQNP…TKSK, and NNNNNDFKSSTMIGKPFSSGGDGSTSP. Residues 32–50 show a composition bias toward low complexity; it reads STTTTTSTTTTTTTTTSTS. Acidic residues predominate over residues 81–102; it reads VDFEDDYDEESSSFDEEDEDSA. Over residues 143–155 the composition is skewed to polar residues; sequence TTANPVQNCQLME. The segment covering 215 to 239 has biased composition (low complexity); the sequence is SSGSSSSSSSNNNNSNSNSNGNCNS. His-800 (phosphohistidine intermediate) is an active-site residue. The tract at residues 1027–1053 is disordered; sequence RSSPIDEDSQTQFMNQTNQKHPVIWSK. The segment covering 1036-1046 has biased composition (polar residues); the sequence is QTQFMNQTNQK.

The protein belongs to the polyphosphate kinase 1 (PPK1) family. In terms of assembly, hexamer. May form higher oligomeric structures in the presence of ATP.

It is found in the vesicle. It carries out the reaction [phosphate](n) + ATP = [phosphate](n+1) + ADP. In terms of biological role, catalyzes the reversible transfer of the terminal phosphate of ATP to form a long-chain polyphosphate (polyP). Produces polyP in a broad range of chain lengths (50-300 Pi residues). Involved in development (growth and fruiting body formation), sporulation, phagocytosis, cell division and the late stages of cytokinesis. The protein is Polyphosphate kinase (ppkA) of Dictyostelium discoideum (Social amoeba).